We begin with the raw amino-acid sequence, 252 residues long: Hsp70-Hsp90 organising protein (252 aa).

TPR repeat units follow at residues 7–40 (AQRL…DPLD), 41–74 (HVLY…KKDW), and 75–108 (PKGY…DPNN). Positions 197–239 (EGNDAEERQRQQREEEERRKKKEEEERKKKEEEEMKKQNRTPE) form a coiled coil. Residues 199-252 (NDAEERQRQQREEEERRKKKEEEERKKKEEEEMKKQNRTPEQIQGDEHKLKVMN) form a disordered region. 2 stretches are compositionally biased toward basic and acidic residues: residues 201–233 (AEER…EMKK) and 243–252 (GDEHKLKVMN).

As to quaternary structure, monomer. Homodimer. Forms a complex composed of HOP and chaperones HSP70 and HSP90; the interaction is stronger in the absence of ATP. Interacts (via TPR 1, 2, 3, 7, 8 and 9 repeats) with HSP70 (via C-terminus); the interaction is direct and is stronger in the absence of ATP. Interacts (via TPR 4, 5 and 6 repeats) with HSP90 (via C-terminus); the interaction is direct.

It localises to the cytoplasm. Acts as a co-chaperone and mediates the association of the chaperones HSP70 and HSP90 probably facilitating substrate transfer from HSP70 to HSP90. Stimulates HSP70 ATPase activity and, in contrast, inhibits HSP90 ATPase activity. This is Hsp70-Hsp90 organising protein from Plasmodium falciparum.